Here is a 400-residue protein sequence, read N- to C-terminus: CCA-adding enzyme (400 aa).

ATP is bound by residues G27 and R30. CTP-binding residues include G27 and R30. Residues D40 and D42 each contribute to the Mg(2+) site. ATP-binding residues include R111, D154, R157, R160, and R163. CTP is bound by residues R111, D154, R157, R160, and R163.

It belongs to the tRNA nucleotidyltransferase/poly(A) polymerase family. Bacterial CCA-adding enzyme type 3 subfamily. In terms of assembly, homodimer. Mg(2+) is required as a cofactor.

It carries out the reaction a tRNA precursor + 2 CTP + ATP = a tRNA with a 3' CCA end + 3 diphosphate. The catalysed reaction is a tRNA with a 3' CCA end + 2 CTP + ATP = a tRNA with a 3' CCACCA end + 3 diphosphate. Catalyzes the addition and repair of the essential 3'-terminal CCA sequence in tRNAs without using a nucleic acid template. Adds these three nucleotides in the order of C, C, and A to the tRNA nucleotide-73, using CTP and ATP as substrates and producing inorganic pyrophosphate. tRNA 3'-terminal CCA addition is required both for tRNA processing and repair. Also involved in tRNA surveillance by mediating tandem CCA addition to generate a CCACCA at the 3' terminus of unstable tRNAs. While stable tRNAs receive only 3'-terminal CCA, unstable tRNAs are marked with CCACCA and rapidly degraded. This is CCA-adding enzyme from Bacillus pumilus (strain SAFR-032).